Here is a 207-residue protein sequence, read N- to C-terminus: Claudin-11 (207 aa).

Residue Met1 is a topological domain, cytoplasmic. Residues 2–22 traverse the membrane as a helical segment; the sequence is VATCLQVVGFVTSFVGWIGII. The Extracellular portion of the chain corresponds to 23-82; it reads VTTSTNDWVVTCGYTIPTCRKLDELGSKGLWADCVMATGLYHCKPLVDILILPGYVQACR. A helical membrane pass occupies residues 83–103; sequence ALMIAASVLGLPAILLLLTVL. The Cytoplasmic segment spans residues 104–122; that stretch reads PCIRMGHEPGVAKYRRAQL. The helical transmembrane segment at 123–143 threads the bilayer; that stretch reads AGVMLVLVALCAMVATIWFPV. Residues 144–157 are Extracellular-facing; the sequence is CAHRETTIVSFGYS. The chain crosses the membrane as a helical span at residues 158–178; the sequence is LYAGWIGAVLCLVGGCVIVCC. Residues 179 to 207 are Cytoplasmic-facing; it reads AGDAQAFGENRFYYSSGSSSPTHAKSAHV. Ser193, Ser194, Ser197, and Ser198 each carry phosphoserine.

The protein belongs to the claudin family. In terms of assembly, interacts with tetraspanin-3/TSPAN3. Interacts with OCLN.

It is found in the cell junction. It localises to the tight junction. The protein resides in the cell membrane. Its function is as follows. Plays a major role in tight junction-specific obliteration of the intercellular space, through calcium-independent cell-adhesion activity. This chain is Claudin-11 (CLDN11), found in Bos taurus (Bovine).